The chain runs to 559 residues: DnaJ homolog subfamily C member 11 (559 aa).

Ala2 carries the post-translational modification N-acetylalanine. One can recognise a J domain in the interval 14–82 (DYYSLLNVRR…QTRAIYDIYG (69 aa)). Position 204 is a phosphoserine (Ser204). Residues 418 to 457 (KELEKQRESTATDILQKKQEAEAAVRLMQESVRRIIEAEE) adopt a coiled-coil conformation.

This sequence belongs to the DNAJC11 family. In terms of assembly, associates with the mitochondrial contact site and cristae organizing system (MICOS) complex, composed of at least MICOS10/MIC10, CHCHD3/MIC19, CHCHD6/MIC25, APOOL/MIC27, IMMT/MIC60, APOO/MIC23/MIC26 and QIL1/MIC13. This complex was also known under the names MINOS or MitOS complex. The MICOS complex associates with mitochondrial outer membrane proteins SAMM50, MTX1 and MTX2 (together described as components of the mitochondrial outer membrane sorting assembly machinery (SAM) complex) and DNAJC11, mitochondrial inner membrane protein TMEM11 and with HSPA9. The MICOS and SAM complexes together with DNAJC11 are part of a large protein complex spanning both membranes termed the mitochondrial intermembrane space bridging (MIB) complex.

The protein localises to the mitochondrion. Its subcellular location is the mitochondrion outer membrane. Functionally, required for mitochondrial inner membrane organization. Seems to function through its association with the MICOS complex and the mitochondrial outer membrane sorting assembly machinery (SAM) complex. This Bos taurus (Bovine) protein is DnaJ homolog subfamily C member 11 (DNAJC11).